We begin with the raw amino-acid sequence, 158 residues long: Protein-export protein SecB (158 aa).

This sequence belongs to the SecB family. In terms of assembly, homotetramer, a dimer of dimers. One homotetramer interacts with 1 SecA dimer.

The protein localises to the cytoplasm. Its function is as follows. One of the proteins required for the normal export of preproteins out of the cell cytoplasm. It is a molecular chaperone that binds to a subset of precursor proteins, maintaining them in a translocation-competent state. It also specifically binds to its receptor SecA. The protein is Protein-export protein SecB of Pectobacterium atrosepticum (strain SCRI 1043 / ATCC BAA-672) (Erwinia carotovora subsp. atroseptica).